Here is a 55-residue protein sequence, read N- to C-terminus: Large ribosomal subunit protein bL33 (55 aa).

It belongs to the bacterial ribosomal protein bL33 family.

In Azoarcus sp. (strain BH72), this protein is Large ribosomal subunit protein bL33.